An 841-amino-acid chain; its full sequence is Chitin synthase 1 (841 aa).

The span at 1 to 13 (MNPGQKQEHDQYP) shows a compositional bias: basic and acidic residues. The interval 1–98 (MNPGQKQEHD…YGEAPRRQPR (98 aa)) is disordered. A compositionally biased stretch (pro residues) spans 76-85 (PPQPMGPPSP). 9 consecutive transmembrane segments (helical) span residues 302–322 (WFFQAFGPVINPNVCVLIDVG), 385–405 (SVFGYISVLPGAFSAYRFTAL), 526–546 (LIFSWFALGNFYLTFYILTSA), 564–584 (ILHTILNYIYILLIIVQFILA), 602–622 (FFAILMVYMMFATIWITVVGV), 644–664 (NIIISIVSTYAMYFIASFLFF), 673–693 (FIQYIFLSPSYTNILNIYAFC), 778–798 (VISWIISNLILVVLITNENIL), and 816–836 (LWSVAGLSAIRFCGSGLYLIF).

It belongs to the chitin synthase family.

The protein localises to the cell membrane. It catalyses the reaction [(1-&gt;4)-N-acetyl-beta-D-glucosaminyl](n) + UDP-N-acetyl-alpha-D-glucosamine = [(1-&gt;4)-N-acetyl-beta-D-glucosaminyl](n+1) + UDP + H(+). Its function is as follows. Polymerizes chitin, a structural polymer of the cell wall and septum, by transferring the sugar moiety of UDP-GlcNAc to the non-reducing end of the growing chitin polymer. The protein is Chitin synthase 1 (chs1) of Phycomyces blakesleeanus (strain ATCC 8743b / DSM 1359 / FGSC 10004 / NBRC 33097 / NRRL 1555).